The sequence spans 398 residues: Potassium channel subfamily K member 4 (398 aa).

At 1–3 the chain is on the cytoplasmic side; the sequence is MRS. Residues 4 to 24 traverse the membrane as a helical segment; the sequence is TTLLALLALVLLYLVSGALVF. At 25–88 the chain is on the extracellular side; that stretch reads QALEQPHEQQ…WTNSSNHSSA (64 aa). N81 and N84 each carry an N-linked (GlcNAc...) asparagine glycan. Residues 89–103 constitute an intramembrane region (helical); it reads WNLGSAFFFSGTIIT. Positions 104, 105, 106, and 107 each coordinate K(+). The selectivity filter 1 stretch occupies residues 104–109; it reads TIGYGN. An intramembrane segment occupies 104 to 110; the sequence is TIGYGNI. The Extracellular portion of the chain corresponds to 111-118; sequence VLHTDAGR. Residues 119 to 151 form a helical membrane-spanning segment; that stretch reads LFCIFYALVGIPLFGMLLAGVGDRLGSSLRRGI. Topologically, residues 152–173 are cytoplasmic; that stretch reads GHIEAIFLKWHVPPGLVRSLSA. Residues 174 to 195 traverse the membrane as a helical segment; that stretch reads VLFLLIGCLLFVLTPTFVFSYM. At 196 to 200 the chain is on the extracellular side; the sequence is ESWSK. Positions 201 to 214 form an intramembrane region, helical; the sequence is LEAIYFVIVTLTTV. Positions 213, 214, 215, and 216 each coordinate K(+). Residues 213-218 are selectivity filter 2; it reads TVGFGD. Residues 215 to 220 lie within the membrane without spanning it; it reads GFGDYV. The Extracellular portion of the chain corresponds to 221–234; sequence PGDGTGQNSPAYQP. The chain crosses the membrane as a helical span at residues 235–261; the sequence is LVWFWILFGLAYFASVLTTIGNWLRAV. At 262–398 the chain is on the cytoplasmic side; sequence SRRTRAEMGG…GRLRDKAVPV (137 aa). Residues 282-292 show a composition bias toward polar residues; sequence TVTARVTQRTG. The disordered stretch occupies residues 282–398; sequence TVTARVTQRT…GRLRDKAVPV (117 aa). Residues 370-389 are compositionally biased toward basic residues; the sequence is PRGRRRPNPSKKPSRPRGPG.

The protein belongs to the two pore domain potassium channel (TC 1.A.1.8) family. In terms of assembly, homodimer; disulfide-linked. Forms heterodimers with other 2-pore domain K(+) channel subunits, such as KCNK2 and KCNK10. N-glycosylated. As to expression, expressed in brain, spinal cord and eye. Not detected in heart, skeletal muscle, liver, lungs, kidney and testis.

The protein resides in the cell membrane. The protein localises to the cell projection. Its subcellular location is the axon. It carries out the reaction K(+)(in) = K(+)(out). It catalyses the reaction Rb(+)(in) = Rb(+)(out). The enzyme catalyses Cs(+)(in) = Cs(+)(out). Activated by arachidonic acid and other polyunsaturated fatty acids. Not affected by volatile general anesthetics such as chloroform, diethyl ether, halothane and isoflurane. Activated at intracellular and extracellular basic pHs. Functionally, k(+) channel that conducts voltage-dependent outward rectifying currents upon membrane depolarization. Voltage sensing is coupled to K(+) electrochemical gradient in an 'ion flux gating' mode where outward but not inward ion flow opens the gate. Converts to voltage-independent 'leak' conductance mode upon stimulation by various stimuli including mechanical membrane stretch, basic pH, temperature and lipids. Homo- and heterodimerizes to form functional channels with distinct regulatory and gating properties. At trigeminal A-beta afferent nerves, the heterodimer of KCNK2/TREK-1 and KCNK4/TRAAK is mostly coexpressed at nodes of Ranvier where it conducts voltage-independent mechanosensitive and thermosensitive currents, allowing rapid action potential repolarization, high speed and high frequence saltatory conduction on myelinated nerves to ensure prompt sensory responses. Permeable to other monovalent cations such as Rb(+) and Cs(+). The sequence is that of Potassium channel subfamily K member 4 from Mus musculus (Mouse).